The following is a 66-amino-acid chain: KEGYIVNLSTGCKYECYKLGDNDYCLKECKLQYGKGAGGYCYAFGCWCTHLYEQAVVWPLPKKTCN.

The LCN-type CS-alpha/beta domain occupies 1-66 (KEGYIVNLST…VWPLPKKTCN (66 aa)). Intrachain disulfides connect C12–C65, C16–C41, C25–C46, and C29–C48.

In terms of tissue distribution, expressed by the venom gland.

Its subcellular location is the secreted. Its activity is regulated as follows. Is susceptible to be neutralized by human antibodies scFvs 10FG2 and HV. Functionally, beta toxins bind voltage-independently at site-4 of sodium channels (Nav) and reduces peak current and shifts the voltage of activation toward more negative potentials thereby affecting sodium channel activation and promoting spontaneous and repetitive firing. This toxin is slightly toxic to mice. This is Beta-mammal toxin Cv1 from Centruroides villegasi (Scorpion).